We begin with the raw amino-acid sequence, 38 residues long: L-amino-acid oxidase (38 aa).

Belongs to the flavin monoamine oxidase family. FIG1 subfamily. Homodimer; non-covalently linked. FAD serves as cofactor. Post-translationally, N-glycosylated. As to expression, expressed by the venom gland.

The protein localises to the secreted. The catalysed reaction is an L-alpha-amino acid + O2 + H2O = a 2-oxocarboxylate + H2O2 + NH4(+). It carries out the reaction L-leucine + O2 + H2O = 4-methyl-2-oxopentanoate + H2O2 + NH4(+). The enzyme catalyses L-phenylalanine + O2 + H2O = 3-phenylpyruvate + H2O2 + NH4(+). It catalyses the reaction L-tryptophan + O2 + H2O = indole-3-pyruvate + H2O2 + NH4(+). The catalysed reaction is L-methionine + O2 + H2O = 4-methylsulfanyl-2-oxobutanoate + H2O2 + NH4(+). It carries out the reaction L-arginine + O2 + H2O = 5-guanidino-2-oxopentanoate + H2O2 + NH4(+). The enzyme catalyses L-2-aminohexanoate + O2 + H2O = 2-oxohexanoate + H2O2 + NH4(+). It catalyses the reaction L-2-aminopentanoate + O2 + H2O = 2-oxopentanoate + H2O2 + NH4(+). The catalysed reaction is L-tyrosine + O2 + H2O = 3-(4-hydroxyphenyl)pyruvate + H2O2 + NH4(+). Its function is as follows. Catalyzes an oxidative deamination of predominantly hydrophobic and aromatic L-amino acids, thus producing hydrogen peroxide that may contribute to the diverse toxic effects of this enzyme. Is very active against L-Phe and L-Tyr, moderately active against L-Trp, L-Met, L-Leu, L-norleucine (L-2-aminohexanoate), L-Arg and L-norvaline (L-2-aminopentanoate), and slightly active against L-His, L-cystine, and L-Ile. L-Gln, L-Lys, L-Asn, L-ornithine, L-Ala and L-Val are oxidized very slowly. Exhibits diverse biological activities, such as hemorrhage, hemolysis, edema, apoptosis of vascular endothelial cells or tumor cell lines, antibacterial and antiparasitic activities. This protein inhibits both agonist- and shear stress-induced platelet aggregation (SIPA). Effects of snake L-amino oxidases on platelets are controversial, since they either induce aggregation or inhibit agonist-induced aggregation. These different effects are probably due to different experimental conditions. The polypeptide is L-amino-acid oxidase (Naja kaouthia (Monocled cobra)).